The following is a 124-amino-acid chain: Large ribosomal subunit protein bL20c (124 aa).

This sequence belongs to the bacterial ribosomal protein bL20 family.

It is found in the plastid. It localises to the chloroplast. In terms of biological role, binds directly to 23S ribosomal RNA and is necessary for the in vitro assembly process of the 50S ribosomal subunit. It is not involved in the protein synthesizing functions of that subunit. This Euglena gracilis protein is Large ribosomal subunit protein bL20c (rpl20).